Consider the following 216-residue polypeptide: Putative flagellar filament outer layer-like protein (216 aa).

Residues 1-22 form a disordered region; that stretch reads MFAQDAAQTGEQTTQNQGENGN. Residues 8-22 are compositionally biased toward low complexity; sequence QTGEQTTQNQGENGN.

The protein resides in the periplasmic flagellum. The protein localises to the periplasm. Functionally, might be part of the flagella. The protein is Putative flagellar filament outer layer-like protein (flaAL) of Brachyspira hyodysenteriae (strain ATCC 49526 / WA1).